The following is a 301-amino-acid chain: Ribosomal RNA small subunit methyltransferase A (301 aa).

Residues Asn29, Leu31, Gly56, Glu77, Asp102, and Asn127 each coordinate S-adenosyl-L-methionine.

This sequence belongs to the class I-like SAM-binding methyltransferase superfamily. rRNA adenine N(6)-methyltransferase family. RsmA subfamily.

Its subcellular location is the cytoplasm. It carries out the reaction adenosine(1518)/adenosine(1519) in 16S rRNA + 4 S-adenosyl-L-methionine = N(6)-dimethyladenosine(1518)/N(6)-dimethyladenosine(1519) in 16S rRNA + 4 S-adenosyl-L-homocysteine + 4 H(+). Specifically dimethylates two adjacent adenosines (A1518 and A1519) in the loop of a conserved hairpin near the 3'-end of 16S rRNA in the 30S particle. May play a critical role in biogenesis of 30S subunits. The sequence is that of Ribosomal RNA small subunit methyltransferase A from Halothermothrix orenii (strain H 168 / OCM 544 / DSM 9562).